The chain runs to 212 residues: Ubiquitin-like protein MDY2 (212 aa).

A Ubiquitin-like domain is found at 74–152 (VHLTLKKIQA…TITVMIKPNP (79 aa)). Residues 150 to 177 (PNPTISKEPEAEKSTNSPAPAPPQELTV) are disordered.

Interacts with GET4.

The protein resides in the cytoplasm. It is found in the cytosol. It localises to the nucleus. In terms of biological role, required for efficient mating. Involved in the production of alpha-factor, the KAR9 and TUB1 location to the shmoo tip and nuclear migration into pheromone-induced shmoos. The polypeptide is Ubiquitin-like protein MDY2 (MDY2) (Saccharomyces cerevisiae (strain ATCC 204508 / S288c) (Baker's yeast)).